The primary structure comprises 215 residues: Cytochrome b6 (215 aa).

Residues 32-52 traverse the membrane as a helical segment; it reads VFYCFGGMTLTCFLVQLATGF. Residue Cys-35 coordinates heme c. Residues His-86 and His-100 each coordinate heme b. The next 3 helical transmembrane spans lie at 90–110, 116–136, and 186–206; these read ASMM…TGGF, LTWI…VTGY, and LHTL…FLMI. Heme b contacts are provided by His-187 and His-202.

It belongs to the cytochrome b family. PetB subfamily. The 4 large subunits of the cytochrome b6-f complex are cytochrome b6, subunit IV (17 kDa polypeptide, PetD), cytochrome f and the Rieske protein, while the 4 small subunits are PetG, PetL, PetM and PetN. The complex functions as a dimer. The cofactor is heme b. Heme c is required as a cofactor.

The protein localises to the plastid. It localises to the chloroplast thylakoid membrane. Component of the cytochrome b6-f complex, which mediates electron transfer between photosystem II (PSII) and photosystem I (PSI), cyclic electron flow around PSI, and state transitions. The sequence is that of Cytochrome b6 from Cyanidium caldarium (Red alga).